The chain runs to 132 residues: MVMTDPIADFLTRVRNANTVYHDKVEAPASNVKKAIAEILKQEGYIKDYESVEDGKQGIIRLYLKYGANKQRVITGLKRISKPGLRVYAKKDQIPRVLGGLGIAIVSTSKGIMTDKQARQSGLGGEVICYVW.

This sequence belongs to the universal ribosomal protein uS8 family. In terms of assembly, part of the 30S ribosomal subunit. Contacts proteins S5 and S12.

Functionally, one of the primary rRNA binding proteins, it binds directly to 16S rRNA central domain where it helps coordinate assembly of the platform of the 30S subunit. This is Small ribosomal subunit protein uS8 from Desulforamulus reducens (strain ATCC BAA-1160 / DSM 100696 / MI-1) (Desulfotomaculum reducens).